The chain runs to 378 residues: UPF0754 membrane protein BALH_0780 (378 aa).

The next 2 helical transmembrane spans lie at 1–21 (MNIWLSMLTTTGLGAIIGGFT) and 357–377 (YLGALLGGMIGIVQGLLLLFL).

It belongs to the UPF0754 family.

The protein resides in the cell membrane. This Bacillus thuringiensis (strain Al Hakam) protein is UPF0754 membrane protein BALH_0780.